Reading from the N-terminus, the 182-residue chain is 7-carboxy-7-deazaguanine synthase (182 aa).

Residues 12–14 (LQG) and R27 contribute to the substrate site. The 165-residue stretch at 18–182 (HTGTPAVFIR…LQTHKLIDIR (165 aa)) folds into the Radical SAM core domain. The [4Fe-4S] cluster site is built by C31, C35, and C38. Residue T40 participates in Mg(2+) binding. T68 is a substrate binding site. Residues G70 and 111–113 (SPK) each bind S-adenosyl-L-methionine.

Belongs to the radical SAM superfamily. 7-carboxy-7-deazaguanine synthase family. Homodimer. [4Fe-4S] cluster is required as a cofactor. S-adenosyl-L-methionine serves as cofactor. Requires Mg(2+) as cofactor.

The catalysed reaction is 6-carboxy-5,6,7,8-tetrahydropterin + H(+) = 7-carboxy-7-deazaguanine + NH4(+). Its pathway is purine metabolism; 7-cyano-7-deazaguanine biosynthesis. Catalyzes the complex heterocyclic radical-mediated conversion of 6-carboxy-5,6,7,8-tetrahydropterin (CPH4) to 7-carboxy-7-deazaguanine (CDG), a step common to the biosynthetic pathways of all 7-deazapurine-containing compounds. In Bacteroides thetaiotaomicron (strain ATCC 29148 / DSM 2079 / JCM 5827 / CCUG 10774 / NCTC 10582 / VPI-5482 / E50), this protein is 7-carboxy-7-deazaguanine synthase.